Consider the following 276-residue polypeptide: UPF0276 protein CV_3513 (276 aa).

Belongs to the UPF0276 family.

This is UPF0276 protein CV_3513 from Chromobacterium violaceum (strain ATCC 12472 / DSM 30191 / JCM 1249 / CCUG 213 / NBRC 12614 / NCIMB 9131 / NCTC 9757 / MK).